Here is a 351-residue protein sequence, read N- to C-terminus: Autoinducer 2 import system permease protein LsrC (351 aa).

Helical transmembrane passes span 14 to 34, 39 to 59, 70 to 90, 93 to 113, 115 to 135, 155 to 175, 213 to 233, 252 to 272, and 284 to 304; these read LLAILTLFALLGIIDRNYFSL, MIFSSAQILILLAIGATLVML, ITGLCAVTVGMALNAGFGLAA, LFALLVGMVAGFFNGILVTWL, IPAIVATLGTLGLYRGLMLLL, ILFSISPIGWLAMLLILAMAW, MNGVMAALAGIVFASQIGFIP, GISLLGGTGTIIGAILGAFLL, and LPAWWNDFITGLVLLGVLVFD.

It belongs to the binding-protein-dependent transport system permease family. AraH/RbsC subfamily. As to quaternary structure, the complex is composed of two ATP-binding proteins (LsrA), two transmembrane proteins (LsrC and LsrD) and a solute-binding protein (LsrB).

The protein resides in the cell inner membrane. In terms of biological role, part of the ABC transporter complex LsrABCD involved in autoinducer 2 (AI-2) import. Probably responsible for the translocation of the substrate across the membrane. This chain is Autoinducer 2 import system permease protein LsrC (lsrC), found in Yersinia pseudotuberculosis serotype O:1b (strain IP 31758).